The sequence spans 108 residues: UPF0060 membrane protein BLi00854/BL03049 (108 aa).

4 consecutive transmembrane segments (helical) span residues 3–23 (IAIGLFLLAGLAEIAGGYLVW), 31–51 (PLWYGLAGGLTLIIYGVIPAF), 60–80 (VYAAYGGVFIILAVLWGWLVD), and 86–106 (LYDWAGAVICLAGVSVMLWAP).

Belongs to the UPF0060 family.

It is found in the cell membrane. The protein is UPF0060 membrane protein BLi00854/BL03049 of Bacillus licheniformis (strain ATCC 14580 / DSM 13 / JCM 2505 / CCUG 7422 / NBRC 12200 / NCIMB 9375 / NCTC 10341 / NRRL NRS-1264 / Gibson 46).